Reading from the N-terminus, the 354-residue chain is 3-isopropylmalate dehydrogenase (354 aa).

76 to 87 (GPRWDGAKERPE) lines the NAD(+) pocket. Substrate is bound by residues Arg-94, Arg-104, Arg-130, and Asp-215. The Mg(2+) site is built by Asp-215, Asp-239, and Asp-243. NAD(+) is bound at residue 273 to 285 (GSAPDIAGKNKAN).

The protein belongs to the isocitrate and isopropylmalate dehydrogenases family. LeuB type 1 subfamily. In terms of assembly, homodimer. Mg(2+) is required as a cofactor. Requires Mn(2+) as cofactor.

Its subcellular location is the cytoplasm. It catalyses the reaction (2R,3S)-3-isopropylmalate + NAD(+) = 4-methyl-2-oxopentanoate + CO2 + NADH. The protein operates within amino-acid biosynthesis; L-leucine biosynthesis; L-leucine from 3-methyl-2-oxobutanoate: step 3/4. Catalyzes the oxidation of 3-carboxy-2-hydroxy-4-methylpentanoate (3-isopropylmalate) to 3-carboxy-4-methyl-2-oxopentanoate. The product decarboxylates to 4-methyl-2 oxopentanoate. The protein is 3-isopropylmalate dehydrogenase of Bacillus thuringiensis subsp. konkukian (strain 97-27).